The primary structure comprises 253 residues: MTSQGRGTRRGGARGNVRAFPENPADAAGLTPRQRKVLEVIRAEVERRGYPPSVREIGEAVGLTSTSSVAHQLKVLEEKGYLRRDPNRPRAMEVLSPDRPRRKADSGAAAVVSTFPGAAAAPAGVGGEGSAAYVPVLGRIAAGGPILAEQAIEDVFPLPKEIVGEGTLFLLRVVGESMINAAICDGDWVVVRQQPVADNGEIVAAMIDGEATVKRLRVRDGKIWLHPENPTFSDIPGEEATILGRIVAVLRRI.

Residues 1-33 (MTSQGRGTRRGGARGNVRAFPENPADAAGLTPR) are disordered. The segment at residues 54-74 (VREIGEAVGLTSTSSVAHQLK) is a DNA-binding region (H-T-H motif). Active-site for autocatalytic cleavage activity residues include Ser-177 and Lys-214.

Belongs to the peptidase S24 family. Homodimer.

The catalysed reaction is Hydrolysis of Ala-|-Gly bond in repressor LexA.. In terms of biological role, represses a number of genes involved in the response to DNA damage (SOS response), including recA and lexA. In the presence of single-stranded DNA, RecA interacts with LexA causing an autocatalytic cleavage which disrupts the DNA-binding part of LexA, leading to derepression of the SOS regulon and eventually DNA repair. The polypeptide is LexA repressor (Frankia alni (strain DSM 45986 / CECT 9034 / ACN14a)).